A 466-amino-acid chain; its full sequence is Ras GTPase-activating protein-binding protein 1 (466 aa).

An NTF2 domain is found at 11-133 (VGREFVRQYY…FYVHNDIFRY (123 aa)). Glycyl lysine isopeptide (Lys-Gly) (interchain with G-Cter in ubiquitin) cross-links involve residues K36, K50, K59, K64, K76, and K123. Residues 142–225 (VTEPQEESEE…EPVLEETVPE (84 aa)) are acidic disordered region. Position 143 is a phosphothreonine (T143). Disordered stretches follow at residues 144 to 172 (EPQEESEEEVEEPEERQQTPEVVPDDSGT) and 184 to 243 (EEHL…QTVQ). Acidic residues-rich tracts occupy residues 145 to 157 (PQEESEEEVEEPE) and 185 to 206 (EHLEEPVAEPEPDPEPEPEQEP). S149 carries the post-translational modification Phosphoserine. Phosphoserine is present on residues S231, S232, S250, and S253. The segment at 255–329 (TSKNLPPSGA…REAGEQGDIE (75 aa)) is disordered. Composition is skewed to basic and acidic residues over residues 297–307 (PQRDQRVREQR) and 318–329 (PIREAGEQGDIE). Residues 340-415 (HQLFIGNLPH…VRLNVEEKKT (76 aa)) enclose the RRM domain. Glycyl lysine isopeptide (Lys-Gly) (interchain with G-Cter in ubiquitin) cross-links involve residues K353 and K357. Phosphoserine is present on S373. K376 participates in a covalent cross-link: Glycyl lysine isopeptide (Lys-Gly) (interchain with G-Cter in ubiquitin). Residue K376 is modified to N6-acetyllysine; alternate. K376 participates in a covalent cross-link: Glycyl lysine isopeptide (Lys-Gly) (interchain with G-Cter in SUMO2); alternate. A Glycyl lysine isopeptide (Lys-Gly) (interchain with G-Cter in ubiquitin); alternate cross-link involves residue K393. An RG-rich region region spans residues 410–466 (VEEKKTRAAREGDRRDNRLRGPGGPRGGLGGGMRGPPRGGMVQKPGFGVGRGLAPRQ). Positions 413–428 (KKTRAAREGDRRDNRL) are enriched in basic and acidic residues. Residues 413-466 (KKTRAAREGDRRDNRLRGPGGPRGGLGGGMRGPPRGGMVQKPGFGVGRGLAPRQ) form a disordered region. An Asymmetric dimethylarginine modification is found at R429. The span at 430-447 (GPGGPRGGLGGGMRGPPR) shows a compositional bias: gly residues. R435 is subject to Asymmetric dimethylarginine; alternate. Omega-N-methylarginine; alternate is present on residues R435, R447, R460, and R465. R460 is modified (dimethylated arginine; alternate).

As to quaternary structure, homodimer and oligomer. Component of a TAU mRNP complex, at least composed of IGF2BP1, ELAVL4 and G3BP1. Binds to the SH3 domain of Ras GTPase-activating protein (RASA1) in proliferating cells. No interaction in quiescent cells. Interacts (via NTF2 domain) with USP10; inhibiting stress granule formation by lowering G3BP1 valence. Interacts (via NTF2 domain) with CAPRIN1; promoting stress granule formation by lowering the saturation-concentration of G3BP1. Interacts (via NTF2 domain) with UBAP2L; promoting stress granule formation. Associates (via RG-rich region) with 40S ribosome subunits. Interacts with RPTOR and SPAG5; this complex is increased by oxidative stress. Interacts with ATXN2L. Interacts with STYXL1. Interacts with CGAS (via N-terminus); this interaction promotes the DNA-binding and activation of CGAS. Interacts (via C-terminus) with RIGI. Interacts with PABPC1. Interacts with QKI (isoforms QKI6 and QKI7); directing N(7)-methylguanine-containing mRNAs to stress granules. It depends on Mg(2+) as a cofactor. Post-translationally, phosphorylation of the acidic disordered region regulates stress granule assembly. RASA1-dependent phosphorylation of Ser-149 induces a conformational change that prevents self-association. Dephosphorylation after HRAS activation is required for stress granule assembly. Ser-149 phosphorylation induces partial nuclear localization. Arg-435 is dimethylated, probably to asymmetric dimethylarginine. In terms of processing, ubiquitinated by TRIM21 via 'Lys-63'-linked polyubiquitination in the NTF2 domain in response to heat shock, leading to stress granule disassembly: ubiquitination promotes interaction with the FAF2 adapter, followed by interaction with VCP, which extracts G3BP1 from stress granules, leading to stress granule disassembly. In case of prolonged stress, ubiquitination by TRIM21 leads to autophagy-dependent degradation of G3BP1 via recruitment of ubiquitinated G3BP1 by SQSTM1 and/or CALCOCO2 to autophagosomes.

It is found in the cytoplasm. Its subcellular location is the cytosol. It localises to the perikaryon. The protein resides in the stress granule. The protein localises to the nucleus. The catalysed reaction is ATP + H2O = ADP + phosphate + H(+). With respect to regulation, under physiological conditions, G3BP1 adopts a compact state that is stabilized by intramolecular interactions between the RG-rich and the acidic regions that inhibit phase separation. Upon stress, polysomes disassemble and mRNAs are released in an unfolded protein-free state. Binding of unfolded mRNA to G3BP1 outcompetes the intramolecular interactions and RNA-bound G3BP1 adopts an expanded conformation in which the RG-rich region becomes exposed to engage in protein-protein and protein-RNA interactions, allowing physical cross-linking of RNA molecules to form protein-RNA condensates, leading to liquid-liquid phase separation (LLPS). In terms of biological role, protein involved in various processes, such as stress granule formation and innate immunity. Plays an essential role in stress granule formation. Stress granules are membraneless compartments that store mRNAs and proteins, such as stalled translation pre-initiation complexes, in response to stress. Promotes formation of stress granules phase-separated membraneless compartment by undergoing liquid-liquid phase separation (LLPS) upon unfolded RNA-binding: functions as a molecular switch that triggers RNA-dependent LLPS in response to a rise in intracellular free RNA concentrations. Also acts as an ATP- and magnesium-dependent helicase: unwinds DNA/DNA, RNA/DNA, and RNA/RNA substrates with comparable efficiency. Acts unidirectionally by moving in the 5' to 3' direction along the bound single-stranded DNA. Unwinds preferentially partial DNA and RNA duplexes having a 17 bp annealed portion and either a hanging 3' tail or hanging tails at both 5'- and 3'-ends. Plays an essential role in innate immunity by promoting CGAS and RIGI activity. Participates in the DNA-triggered cGAS/STING pathway by promoting the DNA binding and activation of CGAS. Triggers the condensation of cGAS, a process probably linked to the formation of membrane-less organelles. Also enhances RIGI-induced type I interferon production probably by helping RIGI at sensing pathogenic RNA. May also act as a phosphorylation-dependent sequence-specific endoribonuclease in vitro: Cleaves exclusively between cytosine and adenine and cleaves MYC mRNA preferentially at the 3'-UTR. This chain is Ras GTPase-activating protein-binding protein 1 (G3BP1), found in Pongo abelii (Sumatran orangutan).